The primary structure comprises 417 residues: Tryptophan decarboxylase (417 aa).

At lysine 263 the chain carries N6-(pyridoxal phosphate)lysine.

The protein belongs to the group II decarboxylase family. The cofactor is pyridoxal 5'-phosphate.

The protein localises to the cytoplasm. It catalyses the reaction L-tryptophan + H(+) = tryptamine + CO2. Inhibited by (S)-alpha-fluoromethyltryptophan. Its function is as follows. Catalyzes the decarboxylation of tryptophan to tryptamine. Tryptamine is a neurotransmitter that induces the release of serotonin, which is suggested to modulate gastrointestinal motility. Therefore, the tryptophan decarboxylase from the gut bacteria Clostridium sporogenes (strain ATCC 15579) may influence host brain and behavior. Has weak activity with tyrosine. Activity against phenylalanine is undetectable. This is Tryptophan decarboxylase from Clostridium sporogenes (strain ATCC 15579).